A 346-amino-acid chain; its full sequence is Tryptophan--tRNA ligase (346 aa).

ATP-binding positions include 10-12 and 18-19; these read QAS and GN. The short motif at 11–19 is the 'HIGH' region element; sequence ASGKQHLGN. D140 contacts L-tryptophan. ATP-binding positions include 152-154, I191, and 200-204; these read GND and KMSKS. Positions 200–204 match the 'KMSKS' region motif; the sequence is KMSKS.

Belongs to the class-I aminoacyl-tRNA synthetase family. In terms of assembly, homodimer.

It is found in the cytoplasm. It carries out the reaction tRNA(Trp) + L-tryptophan + ATP = L-tryptophyl-tRNA(Trp) + AMP + diphosphate + H(+). In terms of biological role, catalyzes the attachment of tryptophan to tRNA(Trp). This chain is Tryptophan--tRNA ligase, found in Mycoplasma pneumoniae (strain ATCC 29342 / M129 / Subtype 1) (Mycoplasmoides pneumoniae).